Here is a 389-residue protein sequence, read N- to C-terminus: Succinate--CoA ligase [ADP-forming] subunit beta (389 aa).

Residues 9–244 enclose the ATP-grasp domain; the sequence is KQLFEHYGLP…LTQNDAREAE (236 aa). ATP is bound by residues Lys46, 53 to 55, Glu99, Cys102, and Glu107; that span reads GRG. Mg(2+) contacts are provided by Asn199 and Asp213. Substrate contacts are provided by residues Asn264 and 321–323; that span reads GIV.

It belongs to the succinate/malate CoA ligase beta subunit family. Heterotetramer of two alpha and two beta subunits. The cofactor is Mg(2+).

The enzyme catalyses succinate + ATP + CoA = succinyl-CoA + ADP + phosphate. It carries out the reaction GTP + succinate + CoA = succinyl-CoA + GDP + phosphate. It functions in the pathway carbohydrate metabolism; tricarboxylic acid cycle; succinate from succinyl-CoA (ligase route): step 1/1. Functionally, succinyl-CoA synthetase functions in the citric acid cycle (TCA), coupling the hydrolysis of succinyl-CoA to the synthesis of either ATP or GTP and thus represents the only step of substrate-level phosphorylation in the TCA. The beta subunit provides nucleotide specificity of the enzyme and binds the substrate succinate, while the binding sites for coenzyme A and phosphate are found in the alpha subunit. This chain is Succinate--CoA ligase [ADP-forming] subunit beta, found in Haemophilus influenzae (strain ATCC 51907 / DSM 11121 / KW20 / Rd).